The sequence spans 688 residues: Potassium-transporting ATPase ATP-binding subunit (688 aa).

4 helical membrane passes run proline 34–leucine 54, alanine 62–alanine 82, valine 219–leucine 239, and valine 260–isoleucine 280. Aspartate 313 (4-aspartylphosphate intermediate) is an active-site residue. ATP-binding positions include aspartate 350, glutamate 354, phenylalanine 383–serine 390, and lysine 401. Mg(2+)-binding residues include aspartate 524 and aspartate 528. A run of 3 helical transmembrane segments spans residues phenylalanine 594–methionine 614, alanine 622–leucine 642, and isoleucine 662–leucine 682.

Belongs to the cation transport ATPase (P-type) (TC 3.A.3) family. Type IA subfamily. As to quaternary structure, the system is composed of three essential subunits: KdpA, KdpB and KdpC.

The protein localises to the cell inner membrane. The enzyme catalyses K(+)(out) + ATP + H2O = K(+)(in) + ADP + phosphate + H(+). Its function is as follows. Part of the high-affinity ATP-driven potassium transport (or Kdp) system, which catalyzes the hydrolysis of ATP coupled with the electrogenic transport of potassium into the cytoplasm. This subunit is responsible for energy coupling to the transport system and for the release of the potassium ions to the cytoplasm. In Yersinia pseudotuberculosis serotype I (strain IP32953), this protein is Potassium-transporting ATPase ATP-binding subunit.